The following is a 363-amino-acid chain: Phosphate acyltransferase (363 aa).

Residues 326 to 363 (ADSHPSKVNAGENAPPLASASNPSPEALPVGSLDRVEG) are disordered. Over residues 337–354 (ENAPPLASASNPSPEALP) the composition is skewed to low complexity.

This sequence belongs to the PlsX family. Homodimer. Probably interacts with PlsY.

The protein localises to the cytoplasm. The enzyme catalyses a fatty acyl-[ACP] + phosphate = an acyl phosphate + holo-[ACP]. Its pathway is lipid metabolism; phospholipid metabolism. Functionally, catalyzes the reversible formation of acyl-phosphate (acyl-PO(4)) from acyl-[acyl-carrier-protein] (acyl-ACP). This enzyme utilizes acyl-ACP as fatty acyl donor, but not acyl-CoA. The polypeptide is Phosphate acyltransferase (Synechococcus sp. (strain JA-3-3Ab) (Cyanobacteria bacterium Yellowstone A-Prime)).